Consider the following 487-residue polypeptide: MKPSTEWWRYLAPLAVIAIIALIPVPAGLESHTWLYFAVFTGVIVGLILEPVPGAVVAMVGISIIAILSPWLLFSPEQLAQPGFKFTAKSLSWAVSGFSNSVIWLIFAAFMFGTGYEKTGLGRRIALILVKKMGHRTLFLGYAVMFSELILAPVTPSNSARGAGIIYPIIRNLPPLYQSQPNDSSSRSIGSYIMWMGIVADCVTSAIFLTAMAPNLLLIGLMKSASHATLSWGDWFLGMLPLSILLVLLVPWLAYVLYPPVLKSGDQVPRWAETELQAMGPLCSREKRMLGLMVGALVLWIFGGDYIDAAMVGYSVVALMLLLRIISWDDIVSNKAAWNVFFWLASLITLATGLNNTGFISWFGKLLAGSLSGYSPTMVMVALIVVFYLLRYFFASATAYTSALAPMMIAAALAMPEIPLPVFCLMVGAAIGLGSILTPYATGPSPIYYGSGYLPTADYWRLGAIFGLIFLVLLVITGLLWMPVVLL.

The next 14 membrane-spanning stretches (helical) occupy residues 10–30, 33–53, 54–74, 93–113, 137–157, 189–209, 236–256, 292–312, 313–333, 340–360, 370–390, 393–413, 418–438, and 465–485; these read YLAP…AGLE, TWLY…EPVP, GAVV…WLLF, WAVS…FMFG, TLFL…VTPS, IGSY…AIFL, FLGM…LAYV, LMVG…AAMV, GYSV…DIVS, VFFW…TGFI, SLSG…FYLL, FFAS…AAAL, IPLP…SILT, and IFGL…MPVV.

This sequence belongs to the SLC13A/DASS transporter (TC 2.A.47) family. DIT1 subfamily.

The protein localises to the cell inner membrane. The catalysed reaction is (2R,3R)-tartrate(out) + succinate(in) = (2R,3R)-tartrate(in) + succinate(out). Catalyzes the uptake of tartrate in exchange for intracellular succinate. Essential for anaerobic L-tartrate fermentation. This is L-tartrate/succinate antiporter (ttdT) from Escherichia coli O157:H7.